Reading from the N-terminus, the 258-residue chain is Putative cysteine-rich repeat secretory protein 35 (258 aa).

A signal peptide spans 1 to 29 (MYSSYSLSKRLIYVPILAIQFLLVRSVSS). Gnk2-homologous domains follow at residues 36–138 (YLNH…TIKP) and 146–255 (FKNT…LYPF).

The protein belongs to the cysteine-rich repeat secretory protein family.

It localises to the secreted. This is Putative cysteine-rich repeat secretory protein 35 (CRRSP35) from Arabidopsis thaliana (Mouse-ear cress).